A 928-amino-acid chain; its full sequence is Periplasmic nitrate reductase (928 aa).

Residues 1-33 constitute a signal peptide (tat-type signal); the sequence is MAFSRREFLKSAAAASAASAVGMSVPSQLLAQA. A 4Fe-4S Mo/W bis-MGD-type domain is found at 40 to 96; that stretch reads WRWDKSVCRFCGTGCGIMVATKNDQIVAVKGDPAAPVNRGLNCIKGYFNAKIMYGAD. Residues Cys-47, Cys-50, Cys-54, and Cys-82 each contribute to the [4Fe-4S] cluster site. Mo-bis(molybdopterin guanine dinucleotide) is bound by residues Lys-84, Gln-152, Asn-177, Cys-181, 214–221, 265–267, Met-422, Gln-426, Asn-532, 557–558, Lys-580, Asp-607, and 818–827; these read WGANMAEM, QTD, SD, and TGRVLEHWHS. Trp-894 lines the substrate pocket. Mo-bis(molybdopterin guanine dinucleotide)-binding residues include Asn-902 and Lys-919.

Belongs to the prokaryotic molybdopterin-containing oxidoreductase family. NasA/NapA/NarB subfamily. Component of the periplasmic nitrate reductase NapAB complex composed of NapA and NapB. Requires [4Fe-4S] cluster as cofactor. Mo-bis(molybdopterin guanine dinucleotide) is required as a cofactor. In terms of processing, predicted to be exported by the Tat system. The position of the signal peptide cleavage has not been experimentally proven.

The protein localises to the periplasm. The catalysed reaction is 2 Fe(II)-[cytochrome] + nitrate + 2 H(+) = 2 Fe(III)-[cytochrome] + nitrite + H2O. In terms of biological role, catalytic subunit of the periplasmic nitrate reductase complex NapAB. Receives electrons from NapB and catalyzes the reduction of nitrate to nitrite. This is Periplasmic nitrate reductase from Wolinella succinogenes (strain ATCC 29543 / DSM 1740 / CCUG 13145 / JCM 31913 / LMG 7466 / NCTC 11488 / FDC 602W) (Vibrio succinogenes).